Reading from the N-terminus, the 391-residue chain is NADH-quinone oxidoreductase subunit D (391 aa).

Belongs to the complex I 49 kDa subunit family. As to quaternary structure, NDH-1 is composed of 14 different subunits. Subunits NuoB, C, D, E, F, and G constitute the peripheral sector of the complex.

Its subcellular location is the cell inner membrane. The catalysed reaction is a quinone + NADH + 5 H(+)(in) = a quinol + NAD(+) + 4 H(+)(out). NDH-1 shuttles electrons from NADH, via FMN and iron-sulfur (Fe-S) centers, to quinones in the respiratory chain. The immediate electron acceptor for the enzyme in this species is believed to be ubiquinone. Couples the redox reaction to proton translocation (for every two electrons transferred, four hydrogen ions are translocated across the cytoplasmic membrane), and thus conserves the redox energy in a proton gradient. This Rickettsia rickettsii (strain Iowa) protein is NADH-quinone oxidoreductase subunit D.